The primary structure comprises 215 residues: uncharacterized protein (215 aa).

S-adenosyl-L-methionine-binding residues include glycine 53, glutamate 74, and aspartate 97.

Belongs to the methyltransferase superfamily. YrrT family.

In terms of biological role, could be a S-adenosyl-L-methionine-dependent methyltransferase. This is an uncharacterized protein from Geobacillus thermodenitrificans (strain NG80-2).